The primary structure comprises 345 residues: RDS/peripherin-like protein xRDS35 (345 aa).

Residues 1 to 24 (MVLFKAKFSFQRRVKLAQTLWLLS) lie on the Cytoplasmic side of the membrane. A helical transmembrane segment spans residues 25 to 43 (WLSVLVGCLTFGMGIFLKV). The Lumenal segment spans residues 44 to 61 (QLWIHNEVMENTSAHAVP). N-linked (GlcNAc...) asparagine glycosylation is present at asparagine 54. Residues 62-80 (NTVITAGLVGILLGIYAGK) traverse the membrane as a helical segment. The Cytoplasmic segment spans residues 81–99 (VSQASMDVTKYQRWKSFMM). A helical membrane pass occupies residues 100 to 123 (PFFFLAILSCLVCLAALVLSVALR). The Lumenal segment spans residues 124–264 (GTLEESLKIG…LSYYTGIMAT (141 aa)). Asparagine 229 carries an N-linked (GlcNAc...) asparagine glycan. Residues 265–290 (NGAAVTLSFLLQASVLVSLRYLHTSM) form a helical membrane-spanning segment. At 291–345 (DKISGPDDMEADTEGFILEKGVTETMNTTLEKMKGLFMSNQVETAEGGGEAAAAS) the chain is on the cytoplasmic side.

The protein belongs to the PRPH2/ROM1 family. In terms of assembly, homodimer; disulfide-linked. Rod specific.

Its subcellular location is the membrane. The protein is RDS/peripherin-like protein xRDS35 (rds35) of Xenopus laevis (African clawed frog).